We begin with the raw amino-acid sequence, 249 residues long: Pyridoxine 5'-phosphate synthase (249 aa).

Position 7 (N7) interacts with 3-amino-2-oxopropyl phosphate. 9–10 (DH) contributes to the 1-deoxy-D-xylulose 5-phosphate binding site. R18 contributes to the 3-amino-2-oxopropyl phosphate binding site. H43 functions as the Proton acceptor in the catalytic mechanism. 1-deoxy-D-xylulose 5-phosphate-binding residues include R45 and H50. The active-site Proton acceptor is E70. T100 lines the 1-deoxy-D-xylulose 5-phosphate pocket. H190 functions as the Proton donor in the catalytic mechanism. 3-amino-2-oxopropyl phosphate contacts are provided by residues G191 and 212-213 (GH).

The protein belongs to the PNP synthase family. Homooctamer; tetramer of dimers.

It localises to the cytoplasm. The catalysed reaction is 3-amino-2-oxopropyl phosphate + 1-deoxy-D-xylulose 5-phosphate = pyridoxine 5'-phosphate + phosphate + 2 H2O + H(+). The protein operates within cofactor biosynthesis; pyridoxine 5'-phosphate biosynthesis; pyridoxine 5'-phosphate from D-erythrose 4-phosphate: step 5/5. Functionally, catalyzes the complicated ring closure reaction between the two acyclic compounds 1-deoxy-D-xylulose-5-phosphate (DXP) and 3-amino-2-oxopropyl phosphate (1-amino-acetone-3-phosphate or AAP) to form pyridoxine 5'-phosphate (PNP) and inorganic phosphate. This chain is Pyridoxine 5'-phosphate synthase, found in Synechococcus sp. (strain CC9311).